A 78-amino-acid chain; its full sequence is Acyl carrier protein (78 aa).

Positions 1–76 (MALFEDIQAV…DVVKYIEDNK (76 aa)) constitute a Carrier domain. Position 36 is an O-(pantetheine 4'-phosphoryl)serine (S36).

This sequence belongs to the acyl carrier protein (ACP) family. In terms of processing, 4'-phosphopantetheine is transferred from CoA to a specific serine of apo-ACP by AcpS. This modification is essential for activity because fatty acids are bound in thioester linkage to the sulfhydryl of the prosthetic group.

It localises to the cytoplasm. The protein operates within lipid metabolism; fatty acid biosynthesis. Carrier of the growing fatty acid chain in fatty acid biosynthesis. This Helicobacter pylori (strain G27) protein is Acyl carrier protein.